We begin with the raw amino-acid sequence, 405 residues long: Cytoplasmic tRNA 2-thiolation protein 2 (405 aa).

Belongs to the CTU2/NCS2 family.

The protein localises to the cytoplasm. It participates in tRNA modification; 5-methoxycarbonylmethyl-2-thiouridine-tRNA biosynthesis. Its function is as follows. Plays a central role in 2-thiolation of mcm(5)S(2)U at tRNA wobble positions of tRNA(Lys), tRNA(Glu) and tRNA(Gln). May act by forming a heterodimer with NCS6/CTU1 that ligates sulfur from thiocarboxylated URM1 onto the uridine of tRNAs at wobble position. The protein is Cytoplasmic tRNA 2-thiolation protein 2 of Drosophila simulans (Fruit fly).